Consider the following 38-residue polypeptide: Potassium channel toxin alpha-KTx 2.21 (38 aa).

3 cysteine pairs are disulfide-bonded: Cys7-Cys29, Cys13-Cys34, and Cys17-Cys36.

As to expression, expressed by the venom gland.

It is found in the secreted. In terms of biological role, inhibits human voltage-gated potassium (Kv) channels Kv1.2/KCNA2 and Kv1.3/KCNA3. Does not block human Kv1.1/KCNA1 at 100nM concentration. The polypeptide is Potassium channel toxin alpha-KTx 2.21 (Centruroides bonito (Scorpion)).